The sequence spans 240 residues: Caffeoyl-CoA O-methyltransferase 5 (240 aa).

Lys14 is a binding site for substrate. S-adenosyl-L-methionine is bound by residues Thr56, Glu78, 80 to 81 (GV), Ser86, Asp104, and Ala133. Asp156 lines the substrate pocket. An a divalent metal cation-binding site is contributed by Asp156. Position 158 (Asp158) interacts with S-adenosyl-L-methionine. Positions 182 and 183 each coordinate a divalent metal cation. Asn187 serves as a coordination point for substrate.

Belongs to the class I-like SAM-binding methyltransferase superfamily. Cation-dependent O-methyltransferase family. CCoAMT subfamily. It depends on Mg(2+) as a cofactor. Expression steadily increases from the bottom to the top of the plant.

It catalyses the reaction (E)-caffeoyl-CoA + S-adenosyl-L-methionine = (E)-feruloyl-CoA + S-adenosyl-L-homocysteine + H(+). It functions in the pathway aromatic compound metabolism; phenylpropanoid biosynthesis. Methylates caffeoyl-CoA to feruloyl-CoA and 5-hydroxyferuloyl-CoA to sinapoyl-CoA. Plays a role in the synthesis of feruloylated polysaccharides. Involved in the reinforcement of the plant cell wall. Also involved in the responding to wounding or pathogen challenge by the increased formation of cell wall-bound ferulic acid polymers. Methylates 5-hydroxyferulolyl-CoA more efficiently than caffeoyl-CoA. This chain is Caffeoyl-CoA O-methyltransferase 5 (CCOAOMT5), found in Nicotiana tabacum (Common tobacco).